Reading from the N-terminus, the 408-residue chain is Elongation factor Tu (408 aa).

One can recognise a tr-type G domain in the interval 10-219 (KTHVNVGTIG…ALDTYIPDPV (210 aa)). GTP is bound by residues 19 to 26 (GHVDHGKT), 88 to 92 (DCPGH), and 143 to 146 (NKCD). Threonine 26 lines the Mg(2+) pocket.

Belongs to the TRAFAC class translation factor GTPase superfamily. Classic translation factor GTPase family. EF-Tu/EF-1A subfamily. In terms of assembly, monomer.

The protein localises to the cytoplasm. The catalysed reaction is GTP + H2O = GDP + phosphate + H(+). Functionally, GTP hydrolase that promotes the GTP-dependent binding of aminoacyl-tRNA to the A-site of ribosomes during protein biosynthesis. The polypeptide is Elongation factor Tu (Brachyspira hyodysenteriae (strain ATCC 49526 / WA1)).